Reading from the N-terminus, the 324-residue chain is DnaJ homolog subfamily B member 2 (324 aa).

A2 carries the post-translational modification N-acetylalanine. The J domain occupies 3 to 69 (SYYEILDVPR…HKREIYDRYG (67 aa)). 2 disordered regions span residues 70–91 (REGL…AGPG) and 218–324 (LSRR…CHIL). UIM domains lie at 207–226 (GVPD…QQPS) and 250–269 (SEDE…MEAA). Residue S311 is modified to Phosphoserine. Residues 314–324 (SEEKASRCHIL) show a composition bias toward basic and acidic residues. C321 carries the post-translational modification Cysteine methyl ester. C321 is lipidated: S-geranylgeranyl cysteine. Positions 321-324 (CHIL) match the CAAX motif motif. Residues 322–324 (HIL) constitute a propeptide, removed in mature form.

Interacts with HSP70 (HSPA1A or HSPA1B). Interacts with HSPA8/Hsc70. Interacts with PSMA3 and most probably with the whole proteasomal complex. In terms of processing, ubiquitinated by STUB1; does not lead to proteasomal degradation.

Its subcellular location is the cytoplasm. The protein resides in the nucleus. It is found in the endoplasmic reticulum membrane. In terms of biological role, functions as a co-chaperone, regulating the substrate binding and activating the ATPase activity of chaperones of the HSP70/heat shock protein 70 family. In parallel, also contributes to the ubiquitin-dependent proteasomal degradation of misfolded proteins. Thereby, may regulate the aggregation and promote the functional recovery of misfolded proteins like HTT, MC4R, PRKN, RHO and SOD1 and be crucial for many biological processes. Isoform 1 which is localized to the endoplasmic reticulum membranes may specifically function in ER-associated protein degradation of misfolded proteins. This is DnaJ homolog subfamily B member 2 from Mus musculus (Mouse).